A 176-amino-acid chain; its full sequence is Inner membrane-spanning protein YciB (176 aa).

5 consecutive transmembrane segments (helical) span residues 24–44, 49–69, 76–96, 121–141, and 149–169; these read TATAVAIGATLVQIAWVAFRH, PMLWVSLGVVTVFGGATLVLH, WKPTVLYWAFSVVLVVSALGF, YVWAVFFVLLGILNLFVAYNF, and FKLFGATGCLVVFIVGQSLWL.

This sequence belongs to the YciB family.

The protein localises to the cell inner membrane. Functionally, plays a role in cell envelope biogenesis, maintenance of cell envelope integrity and membrane homeostasis. The sequence is that of Inner membrane-spanning protein YciB from Paraburkholderia phymatum (strain DSM 17167 / CIP 108236 / LMG 21445 / STM815) (Burkholderia phymatum).